Here is a 1220-residue protein sequence, read N- to C-terminus: DNA polymerase catalytic subunit (1220 aa).

2 disordered regions span residues 21 to 43 (GKRP…RPPQ) and 641 to 691 (QADA…KPGV). Polar residues predominate over residues 646–660 (SETSELAMDSQSHAF).

Belongs to the DNA polymerase type-B family. As to quaternary structure, forms a complex with the ssDNA-binding protein, the DNA polymerase processivity factor, and the alkaline exonuclease. Interacts with the helicase-primase complex composed of the primase, the helicase and the primase-associated factor; this interaction may coordinate leading and lagging strand DNA synthesis at the replication fork.

It localises to the host nucleus. It carries out the reaction DNA(n) + a 2'-deoxyribonucleoside 5'-triphosphate = DNA(n+1) + diphosphate. It catalyses the reaction Endonucleolytic cleavage to 5'-phosphomonoester.. In terms of biological role, replicates viral genomic DNA. The replication complex is composed of six viral proteins: the DNA polymerase, processivity factor, primase, primase-associated factor, helicase, and ssDNA-binding protein. Additionally, the polymerase contains an intrinsic ribonuclease H (RNase H) activity that specifically degrades RNA/DNA heteroduplexes or duplex DNA substrates in the 5' to 3' direction. Therefore, it can catalyze the excision of the RNA primers that initiate the synthesis of Okazaki fragments at a replication fork during viral DNA replication. In Equine herpesvirus 1 (strain Ab4p) (EHV-1), this protein is DNA polymerase catalytic subunit.